The following is a 222-amino-acid chain: Isoprenyl transferase (222 aa).

The active site involves Asp-12. Residue Asp-12 coordinates Mg(2+). Residues 13-16 (GNRR), Trp-17, and 57-59 (STE) contribute to the substrate site. Catalysis depends on Asn-60, which acts as the Proton acceptor. Substrate contacts are provided by residues Trp-61, Arg-63, Arg-171, and 177 to 179 (RLS). Residue Glu-190 coordinates Mg(2+).

It belongs to the UPP synthase family. Homodimer. Mg(2+) is required as a cofactor.

Catalyzes the condensation of isopentenyl diphosphate (IPP) with allylic pyrophosphates generating different type of terpenoids. In Campylobacter jejuni subsp. jejuni serotype O:2 (strain ATCC 700819 / NCTC 11168), this protein is Isoprenyl transferase (uppS).